The primary structure comprises 283 residues: Pantothenate synthetase 1 (283 aa).

30–37 (MGYLHDGH) contacts ATP. The Proton donor role is filled by His-37. Gln-61 contacts (R)-pantoate. Gln-61 is a beta-alanine binding site. 147 to 150 (GQKD) contributes to the ATP binding site. Gln-153 provides a ligand contact to (R)-pantoate. ATP contacts are provided by residues Val-176 and 184-187 (MSSR).

The protein belongs to the pantothenate synthetase family. Homodimer.

The protein localises to the cytoplasm. The enzyme catalyses (R)-pantoate + beta-alanine + ATP = (R)-pantothenate + AMP + diphosphate + H(+). It functions in the pathway cofactor biosynthesis; (R)-pantothenate biosynthesis; (R)-pantothenate from (R)-pantoate and beta-alanine: step 1/1. Its function is as follows. Catalyzes the condensation of pantoate with beta-alanine in an ATP-dependent reaction via a pantoyl-adenylate intermediate. The sequence is that of Pantothenate synthetase 1 from Bradyrhizobium diazoefficiens (strain JCM 10833 / BCRC 13528 / IAM 13628 / NBRC 14792 / USDA 110).